The following is an 879-amino-acid chain: Metabotropic glutamate receptor 3 (879 aa).

An N-terminal signal peptide occupies residues 1-24; it reads MKMLTRLQVLTLALFSKGFLLSLG. At 25–577 the chain is on the extracellular side; sequence DHNFLRREIK…DYIRWEDAWA (553 aa). Cysteine 57 and cysteine 99 are disulfide-bonded. L-glutamate is bound by residues serine 151 and 172–174; that span reads AST. Asparagine 209 carries N-linked (GlcNAc...) asparagine glycosylation. Tyrosine 222 is an L-glutamate binding site. 7 cysteine pairs are disulfide-bonded: cysteine 240-cysteine 527, cysteine 361-cysteine 373, cysteine 412-cysteine 419, cysteine 509-cysteine 528, cysteine 513-cysteine 531, cysteine 534-cysteine 546, and cysteine 549-cysteine 562. A glycan (N-linked (GlcNAc...) asparagine) is linked at asparagine 292. Aspartate 301 provides a ligand contact to L-glutamate. Lysine 389 provides a ligand contact to L-glutamate. N-linked (GlcNAc...) asparagine glycans are attached at residues asparagine 414 and asparagine 439. Residues 578-598 form a helical membrane-spanning segment; sequence IGPVTIACLGFMCTCMVITVF. Topologically, residues 599–613 are cytoplasmic; that stretch reads IKHNNTPLVKASGRE. Residues 614 to 634 traverse the membrane as a helical segment; it reads LCYILLFGVGLSYCMTFFFIA. Residues 635–688 lie on the Extracellular side of the membrane; that stretch reads KPSPVICALRRLGLGSSFAICYSALLTKTNCIARIFDGVKNGAQRPKFISPSSQ. Residues 689-709 traverse the membrane as a helical segment; that stretch reads VFICLGLILVQIVMVSVWLIL. The Cytoplasmic portion of the chain corresponds to 710–735; that stretch reads EAPGTRRYTLAEKRETVILKCNVKDS. A helical membrane pass occupies residues 736 to 756; it reads SMLISLTYDVILVILCTVYAF. Topologically, residues 757–769 are extracellular; sequence KTRKCPENFNEAK. A helical transmembrane segment spans residues 770–790; sequence FIGFTMYTTCIIWLAFLPIFY. Residues 791–807 lie on the Cytoplasmic side of the membrane; sequence VTSSDYRVQTTTMCISV. The helical transmembrane segment at 808-828 threads the bilayer; that stretch reads SLSGFVVLGCLFAPKVHIILF. The Extracellular portion of the chain corresponds to 829–879; that stretch reads QPQKNVVTHRLHLNRFSVSGTGTTYSQSSASMYVPTVCNGREVLDSTTSSL.

The protein belongs to the G-protein coupled receptor 3 family. In terms of assembly, interacts with TAMALIN.

It localises to the cell membrane. G-protein coupled receptor for glutamate. Ligand binding causes a conformation change that triggers signaling via guanine nucleotide-binding proteins (G proteins) and modulates the activity of down-stream effectors. Signaling inhibits adenylate cyclase activity. The sequence is that of Metabotropic glutamate receptor 3 (GRM3) from Macaca fascicularis (Crab-eating macaque).